Here is a 373-residue protein sequence, read N- to C-terminus: tRNA-specific 2-thiouridylase MnmA (373 aa).

ATP is bound by residues 12–19 (GMSGGVDS) and Met38. The segment at 98 to 100 (NPD) is interaction with target base in tRNA. Cys103 acts as the Nucleophile in catalysis. Cys103 and Cys200 are disulfide-bonded. Gly127 provides a ligand contact to ATP. An interaction with tRNA region spans residues 150–152 (KDQ). Cys200 acts as the Cysteine persulfide intermediate in catalysis. Residues 312-313 (RY) are interaction with tRNA.

The protein belongs to the MnmA/TRMU family.

Its subcellular location is the cytoplasm. It catalyses the reaction S-sulfanyl-L-cysteinyl-[protein] + uridine(34) in tRNA + AH2 + ATP = 2-thiouridine(34) in tRNA + L-cysteinyl-[protein] + A + AMP + diphosphate + H(+). Its function is as follows. Catalyzes the 2-thiolation of uridine at the wobble position (U34) of tRNA, leading to the formation of s(2)U34. The sequence is that of tRNA-specific 2-thiouridylase MnmA from Streptococcus agalactiae serotype III (strain NEM316).